Here is a 420-residue protein sequence, read N- to C-terminus: MKLSATTLTAASLIGYSTIVSALPYAADIDTGCTTTAHGSHQHKRAVAVTYVYETVTVDKNGQTVTPTSTEASSTVASTTTLISESSVTKSSSKVASSSESTEQIATTSSSAQTTLTSSETSTSESSVPISTSGSASTSSAASSATGSIYGDLADFSGPYEKFEDGTIPCGQFPSGQGVIPISWLDEGGWSGVENTDTSTGGSCKEGSYCSYACQPGMSKTQWPSDQPSDGRSIGGLLCKDGYLYRSNTDTDYLCEWGVDAAYVVSELSNDVAICRTDYPGTENMVIPTYVQAGDSLPLTVVDQDTYYTWQGLKTSAQYYVNNAGISVEDACVWGSSSSGVGNWAPLNFGAGSSDGVAYLSLIPNPNNGNALNFNVKIVAADDSSTVNGECIYENGSFSGGSDGCTVSVTAGKAKFVLYN.

Positions 1 to 24 (MKLSATTLTAASLIGYSTIVSALP) are cleaved as a signal peptide. Residues 89-145 (TKSSSKVASSSESTEQIATTSSSAQTTLTSSETSTSESSVPISTSGSASTSSAASSA) form a disordered region. The N-linked (GlcNAc...) asparagine glycan is linked to Asn395.

Belongs to the SUN family. Glycosylated.

The protein resides in the secreted. It localises to the cell wall. In terms of biological role, involved in the remodeling of the cell wall during the various phases of yeast culture development and under various environmental conditions and plays a role in septation. The chain is Probable secreted beta-glucosidase SUN4 (SUN4) from Saccharomyces cerevisiae (strain ATCC 204508 / S288c) (Baker's yeast).